A 247-amino-acid chain; its full sequence is ATP synthase subunit a (247 aa).

6 consecutive transmembrane segments (helical) span residues 23–43 (ISFT…TLFL), 90–110 (LFMF…VIGF), 116–136 (VIVT…IGFA), 145–165 (MFFP…IELI), 194–214 (GFVV…FAFL), and 215–235 (SAIT…FTIL).

This sequence belongs to the ATPase A chain family. In terms of assembly, F-type ATPases have 2 components, CF(1) - the catalytic core - and CF(0) - the membrane proton channel. CF(1) has five subunits: alpha(3), beta(3), gamma(1), delta(1), epsilon(1). CF(0) has three main subunits: a(1), b(2) and c(9-12). The alpha and beta chains form an alternating ring which encloses part of the gamma chain. CF(1) is attached to CF(0) by a central stalk formed by the gamma and epsilon chains, while a peripheral stalk is formed by the delta and b chains.

The protein localises to the cell inner membrane. Key component of the proton channel; it plays a direct role in the translocation of protons across the membrane. This chain is ATP synthase subunit a, found in Paramagnetospirillum magneticum (strain ATCC 700264 / AMB-1) (Magnetospirillum magneticum).